The chain runs to 553 residues: PE cleavage protein A (553 aa).

Residues 1–92 form the PE domain; the sequence is MSLLVVAPEW…SAGSYSAAEA (92 aa). Asp-293 is an active-site residue.

This sequence belongs to the mycobacterial PE family. PGRS subfamily. Undergoes auto-proteolytic processing.

It localises to the secreted. It is found in the cell surface. Functionally, aspartic protease that processes the lipase LipY and other PE_PGRS proteins. Can also cleave itself. Cleaves LipY both inside the PE domain, before amino acid 98, and after amino acids 136 and 149. Involved in virulence. The polypeptide is PE cleavage protein A (Mycobacterium marinum (strain ATCC BAA-535 / M)).